The primary structure comprises 107 residues: Circadian clock oscillator protein KaiB (107 aa).

Belongs to the KaiB family. May undergo a major conformational rearrangment; in the free state forms homooligomers. When bound to KaiC switches to a monomeric thioredoxin-fold (KaiB(fs)). The active oscillator complex is probably KaiC(6):KaiB(6).

Its function is as follows. Component of the KaiBC clock protein complex, which constitutes the main circadian regulator in cyanobacteria; it may modify the ATPase activity of KaiC. In terms of biological role, does not stimulate dephosphorylation of endogenous KaiC, although it does stimulate dephosphorylation of KiaC from S.elongatus strain PCC 7942. Reduces the ATPase activity of KaiC by about half in vitro, which may be its function in vivo. Functionally, may be a metamorphic protein which reversibly switches between an inactive tetrameric fold and a rare, thioredoxin-like monomeric fold (KaiB(fs)). KaiB(fs) binds phospho-KaiC, and perhaps clock output effectors. The sequence is that of Circadian clock oscillator protein KaiB from Prochlorococcus marinus subsp. pastoris (strain CCMP1986 / NIES-2087 / MED4).